Here is a 59-residue protein sequence, read N- to C-terminus: MAVQQNKKSPSKRGMHRSHDALTAPALFVDSTTGEVHRPHHISPNGMYRGRKVVKAKGE.

A disordered region spans residues Met1–Glu59. The span at Arg49–Glu59 shows a compositional bias: basic residues.

Belongs to the bacterial ribosomal protein bL32 family.

In Neisseria gonorrhoeae (strain ATCC 700825 / FA 1090), this protein is Large ribosomal subunit protein bL32.